The following is a 539-amino-acid chain: Chaperonin GroEL (539 aa).

ATP is bound by residues 29 to 32 (TLGP), 86 to 90 (DGTTT), Gly-413, 479 to 481 (DAL), and Asp-495.

This sequence belongs to the chaperonin (HSP60) family. In terms of assembly, forms a cylinder of 14 subunits composed of two heptameric rings stacked back-to-back. Interacts with the co-chaperonin GroES.

The protein localises to the cytoplasm. It catalyses the reaction ATP + H2O + a folded polypeptide = ADP + phosphate + an unfolded polypeptide.. Functionally, together with its co-chaperonin GroES, plays an essential role in assisting protein folding. The GroEL-GroES system forms a nano-cage that allows encapsulation of the non-native substrate proteins and provides a physical environment optimized to promote and accelerate protein folding. The polypeptide is Chaperonin GroEL (Thermosipho africanus (strain TCF52B)).